We begin with the raw amino-acid sequence, 400 residues long: F-box/LRR-repeat protein 14 (400 aa).

An F-box domain is found at 2–48 (ETHISCLFPELLAMIFGYLDVRDKGRAAQVCTAWRDAAYHKSVWRGV). Residues 2 to 48 (ETHISCLFPELLAMIFGYLDVRDKGRAAQVCTAWRDAAYHKSVWRGV) form a required for down-regulation of SNAI1 region. 5 LRR repeats span residues 144-163 (GLEV…GLLL), 170-191 (RLKS…GHLA), 203-225 (GLEQ…HISR), 229-250 (GLRL…LHLS), and 254-275 (SLRS…MHLA).

Part of a SCF (SKP1-cullin-F-box) ubiquitin-protein ligase complex. Interacts with SKP1 and CUL1. Interacts with SNAI1; the interaction requires the phosphorylation of the two serine residues in the substrate destruction motif D-S-G-X(2,3,4)-S.

It is found in the cytoplasm. Substrate-recognition component of some SCF (SKP1-CUL1-F-box protein)-type E3 ubiquitin-protein ligase complexes. The SCF(FBXL14) complex acts by mediating ubiquitination and subsequent degradation of SNAI1. This chain is F-box/LRR-repeat protein 14 (FBXL14), found in Bos taurus (Bovine).